The sequence spans 436 residues: GTPase Der (436 aa).

2 consecutive EngA-type G domains span residues 4–167 (PTVA…PVEE) and 175–351 (IRFS…ESQN). GTP contacts are provided by residues 10 to 17 (GRPNVGKS), 57 to 61 (DTGGI), 119 to 122 (NKVD), 181 to 188 (GRPNVGKS), 229 to 233 (DTAGM), and 294 to 297 (NKWD). The KH-like domain maps to 352–436 (KRIPSAVLND…PINLIARKRK (85 aa)).

The protein belongs to the TRAFAC class TrmE-Era-EngA-EngB-Septin-like GTPase superfamily. EngA (Der) GTPase family. Associates with the 50S ribosomal subunit.

Its function is as follows. GTPase that plays an essential role in the late steps of ribosome biogenesis. The protein is GTPase Der of Streptococcus agalactiae serotype III (strain NEM316).